The following is a 393-amino-acid chain: Chorismate synthase (393 aa).

NADP(+)-binding residues include Arg-40 and Arg-46. Residues Arg-135–Ser-137, Gln-257–Ala-258, Gly-301, Lys-316–Thr-320, and Arg-342 each bind FMN. The segment at Asp-280–Gly-306 is disordered.

This sequence belongs to the chorismate synthase family. Homotetramer. FMNH2 serves as cofactor.

It carries out the reaction 5-O-(1-carboxyvinyl)-3-phosphoshikimate = chorismate + phosphate. The protein operates within metabolic intermediate biosynthesis; chorismate biosynthesis; chorismate from D-erythrose 4-phosphate and phosphoenolpyruvate: step 7/7. Its function is as follows. Catalyzes the anti-1,4-elimination of the C-3 phosphate and the C-6 proR hydrogen from 5-enolpyruvylshikimate-3-phosphate (EPSP) to yield chorismate, which is the branch point compound that serves as the starting substrate for the three terminal pathways of aromatic amino acid biosynthesis. This reaction introduces a second double bond into the aromatic ring system. This chain is Chorismate synthase, found in Thermobifida fusca (strain YX).